Consider the following 128-residue polypeptide: MTGYTPDEKLRLQQLRELRRRWLKDQELSPREPVLPPQKMGPMEKFWNKFLENKSPWRKMVHGVYQKSIFVFTHVLVPVWIIHYYMKYHVSEKPYGIVEKKSRIFPGDTILETGEVIPPMKEFPDQHH.

At Thr-2 the chain carries N-acetylthreonine. N6-acetyllysine is present on Lys-24. A helical transmembrane segment spans residues 68–86 (SIFVFTHVLVPVWIIHYYM).

It belongs to the complex I NDUFB6 subunit family. As to quaternary structure, complex I is composed of 45 different subunits.

Its subcellular location is the mitochondrion inner membrane. Its function is as follows. Accessory subunit of the mitochondrial membrane respiratory chain NADH dehydrogenase (Complex I), that is believed not to be involved in catalysis. Complex I functions in the transfer of electrons from NADH to the respiratory chain. The immediate electron acceptor for the enzyme is believed to be ubiquinone. The polypeptide is NADH dehydrogenase [ubiquinone] 1 beta subcomplex subunit 6 (NDUFB6) (Gorilla gorilla gorilla (Western lowland gorilla)).